The following is a 202-amino-acid chain: MGNSKSGALSKEILEELQLNTKFTEEELCSWYQSFLKECPSGRITKQEFQSIYSKFFPEADPKAYAQHVFRSFDANSDGTLDFKEYVIALHMTSAGKTNQKLEWAFSLYDVDGNGAISKSEVLEIVMAIFKMISPEDVKQLPEDENTPEKRAEKIWGFFGKKDDDKLTEEEFIEGTLANKEILRLIQFEPRKVKEKLKEKKP.

Residue Gly2 is the site of N-myristoyl glycine attachment. The residue at position 39 (Cys39) is a Cysteine sulfenic acid (-SOH). EF-hand domains lie at 41 to 59 (SGRITKQEFQSIYSKFFPE), 61 to 96 (DPKAYAQHVFRSFDANSDGTLDFKEYVIALHMTSAG), 97 to 132 (KTNQKLEWAFSLYDVDGNGAISKSEVLEIVMAIFKM), and 147 to 182 (TPEKRAEKIWGFFGKKDDDKLTEEEFIEGTLANKEI). 9 residues coordinate Ca(2+): Asp74, Asn76, Asp78, Thr80, Glu85, Asp110, Asp112, Asn114, and Glu121. Residues 189 to 192 (EPRK) form an interaction with GRK1 region.

The protein belongs to the recoverin family. As to quaternary structure, homodimer; disulfide-linked. Homodimerization is caused by prolonged intense illumination. May form a complex composed of RHO, GRK1 and RCVRN in a Ca(2+)-dependent manner; RCVRN prevents the interaction between GRK1 and RHO. Interacts (via C-terminus) with GRK1 (via N-terminus); the interaction is Ca(2+)-dependent. The N-terminal glycine is linked to one of four different types of acyl groups. The most abundant is myristoleate (14:1), but 14:0, 14:2, and 12:0 acyl residues are also present. The Ca(2+) induced exposure of the myristoyl group, known as the calcium-myristoyl switch, promotes RCVRN binding to the photoreceptor cell membranes only when intracellular Ca(2+) concentration is high. Post-translationally, oxidation on Cys-39 occurs in response to prolonged intense illumination and results in the formation of disulfide homodimers, and to a lesser extent disulfide-linked heterodimers.

The protein resides in the photoreceptor inner segment. It localises to the cell projection. Its subcellular location is the cilium. It is found in the photoreceptor outer segment. The protein localises to the photoreceptor outer segment membrane. The protein resides in the perikaryon. Functionally, acts as a calcium sensor and regulates phototransduction of cone and rod photoreceptor cells. Modulates light sensitivity of cone photoreceptor in dark and dim conditions. In response to high Ca(2+) levels induced by low light levels, prolongs RHO/rhodopsin activation in rod photoreceptor cells by binding to and inhibiting GRK1-mediated phosphorylation of RHO/rhodopsin. Plays a role in scotopic vision/enhances vision in dim light by enhancing signal transfer between rod photoreceptors and rod bipolar cells. Improves rod photoreceptor sensitivity in dim light and mediates response of rod photoreceptors to facilitate detection of change and motion in bright light. The chain is Recoverin (RCVRN) from Canis lupus familiaris (Dog).